A 229-amino-acid chain; its full sequence is Ribonuclease 3 (229 aa).

The RNase III domain occupies 7-132 (LKAFEGRIGH…VIAAVYLDAG (126 aa)). Glu45 provides a ligand contact to Mg(2+). Asp49 is a catalytic residue. 2 residues coordinate Mg(2+): Asp118 and Glu121. Glu121 is a catalytic residue. Residues 157–226 (DAKTALQEWA…ARALLARMEA (70 aa)) form the DRBM domain.

Belongs to the ribonuclease III family. As to quaternary structure, homodimer. It depends on Mg(2+) as a cofactor.

It localises to the cytoplasm. It carries out the reaction Endonucleolytic cleavage to 5'-phosphomonoester.. Functionally, digests double-stranded RNA. Involved in the processing of primary rRNA transcript to yield the immediate precursors to the large and small rRNAs (23S and 16S). Processes some mRNAs, and tRNAs when they are encoded in the rRNA operon. Processes pre-crRNA and tracrRNA of type II CRISPR loci if present in the organism. The polypeptide is Ribonuclease 3 (Cereibacter sphaeroides (strain ATCC 17029 / ATH 2.4.9) (Rhodobacter sphaeroides)).